The sequence spans 129 residues: 8-oxo-dGTP diphosphatase (129 aa).

Residues 1–129 (MKKLQIAVGI…EPVIAKLKRL (129 aa)) form the Nudix hydrolase domain. Residues arginine 23, histidine 28, and 34–37 (EFPG) each bind 8-oxo-dGTP. Glycine 37 and glutamate 57 together coordinate Mg(2+). The Nudix box motif lies at 38-59 (GKIEMGETPEQAVVRELQEEVG). Asparagine 119 is an 8-oxo-dGTP binding site.

The protein belongs to the Nudix hydrolase family. As to quaternary structure, monomer. The cofactor is Mg(2+).

It catalyses the reaction 8-oxo-dGTP + H2O = 8-oxo-dGMP + diphosphate + H(+). It carries out the reaction 8-oxo-GTP + H2O = 8-oxo-GMP + diphosphate + H(+). The catalysed reaction is 8-oxo-dGDP + H2O = 8-oxo-dGMP + phosphate + H(+). The enzyme catalyses 8-oxo-GDP + H2O = 8-oxo-GMP + phosphate + H(+). Its function is as follows. Specifically hydrolyzes both 8-oxo-deoxyguanosine triphosphate (8-oxo-dGTP) and 8-oxo-guanosine triphosphate (8-oxo-GTP) to the related monophosphates, thereby cleaning up the nucleotide pools and preventing misincorporation of 8-oxoGua into DNA and RNA. It prevents replicational errors by removing an oxidatively damaged form of guanine (8-oxo-dGTP) from DNA and the nucleotide pool. 8-oxo-dGTP can be inserted opposite dA and dC residues of template DNA with almost equal efficiency thus leading to A.T to G.C transversions. MutT may also ensure transcriptional fidelity, removing 8-oxo-GTP from the ribonucleotide triphosphate pool. However, due to the lower efficiency of RNA polymerase 8-oxo-GTP incorporation, MutT is probably not a major contributor to transcriptional fidelity. It also hydrolyzes 8-oxo-dGDP and 8-oxo-GDP to their monophosphate form. In vitro, can also use dGTP, dGDP and other various nucleoside di- and triphosphates, with much lower efficiency. Works cooperatively with MutM and MutY to prevent accumulation in the DNA of oxidized guanine residues. The polypeptide is 8-oxo-dGTP diphosphatase (Escherichia coli (strain K12)).